Here is a 205-residue protein sequence, read N- to C-terminus: Max-like protein homolog 2 (205 aa).

Composition is skewed to low complexity over residues 1-12 (MSRSRSAAASSS) and 26-40 (SASS…ATNS). Residues 1–58 (MSRSRSAAASSSQKPDDMDLMSPDGSASSPSAPNTPATNSGGFSSDRKKATHLRCERQ) form a disordered region. A compositionally biased stretch (basic and acidic residues) spans 45–58 (SDRKKATHLRCERQ). Residues 47–60 (RKKATHLRCERQRR) are basic motif. A bHLH domain is found at 47 to 101 (RKKATHLRCERQRREAINSGYSDLKDLIPQTTTSLGCKTTNAAILFRACDFMSQL). Positions 61–101 (EAINSGYSDLKDLIPQTTTSLGCKTTNAAILFRACDFMSQL) are helix-loop-helix motif. Residues 98-132 (MSQLKTDISDADKQLAQLNAQAAALEMIASEYEQM) adopt a coiled-coil conformation.

As to expression, widely expressed.

The protein resides in the nucleus. It localises to the cytoplasm. The protein localises to the mitochondrion. In terms of biological role, transcription factor. Binds to the E box motif 5'-CACGTG-3', probably in a heterodimeric complex with mml-1. Involved in modulating longevity in response to TOR signaling, dietary restriction, the decline in protein homeostasis associated with normal aging, germline signaling and the insulin-like signaling pathway. Plays a role in autophagy. Involved in regulating migration of the ray 1 precursor cells in the male tail, acting in concert with Wnt and semaphorin signaling pathways. Regulates transcription of genes encoding extracellular matrix (ECM) components which may contribute to the substratum required for migration of the neighboring ray 1 precursor cells. Required for resistance to oxidative stress. Involved in promoting infection by the microsporidian pathogen N.parisii, probably acting independently of its canonical partner, mml-1. In Caenorhabditis elegans, this protein is Max-like protein homolog 2.